We begin with the raw amino-acid sequence, 411 residues long: Dual-specificity RNA methyltransferase RlmN (411 aa).

Glutamate 124 (proton acceptor) is an active-site residue. In terms of domain architecture, Radical SAM core spans 130 to 379; the sequence is EEGRGTLCIS…IRTPRGRDIL (250 aa). Cysteine 137 and cysteine 382 form a disulfide bridge. 3 residues coordinate [4Fe-4S] cluster: cysteine 144, cysteine 148, and cysteine 151. Residues 208 to 209, serine 240, 262 to 264, and asparagine 339 contribute to the S-adenosyl-L-methionine site; these read GE and SLH. The active-site S-methylcysteine intermediate is cysteine 382.

Belongs to the radical SAM superfamily. RlmN family. [4Fe-4S] cluster is required as a cofactor.

It localises to the cytoplasm. The catalysed reaction is adenosine(2503) in 23S rRNA + 2 reduced [2Fe-2S]-[ferredoxin] + 2 S-adenosyl-L-methionine = 2-methyladenosine(2503) in 23S rRNA + 5'-deoxyadenosine + L-methionine + 2 oxidized [2Fe-2S]-[ferredoxin] + S-adenosyl-L-homocysteine. It catalyses the reaction adenosine(37) in tRNA + 2 reduced [2Fe-2S]-[ferredoxin] + 2 S-adenosyl-L-methionine = 2-methyladenosine(37) in tRNA + 5'-deoxyadenosine + L-methionine + 2 oxidized [2Fe-2S]-[ferredoxin] + S-adenosyl-L-homocysteine. In terms of biological role, specifically methylates position 2 of adenine 2503 in 23S rRNA and position 2 of adenine 37 in tRNAs. m2A2503 modification seems to play a crucial role in the proofreading step occurring at the peptidyl transferase center and thus would serve to optimize ribosomal fidelity. This chain is Dual-specificity RNA methyltransferase RlmN, found in Rhizobium meliloti (strain 1021) (Ensifer meliloti).